We begin with the raw amino-acid sequence, 84 residues long: Large ribosomal subunit protein bL27 (84 aa).

The segment at 1-21 is disordered; sequence MAHKKGGGSTKNGRDSNPKYL.

Belongs to the bacterial ribosomal protein bL27 family.

This is Large ribosomal subunit protein bL27 from Chlorobium limicola (strain DSM 245 / NBRC 103803 / 6330).